The primary structure comprises 343 residues: Selenide, water dikinase (343 aa).

The active site involves Sec-16. Residue Sec-16 is a non-standard amino acid, selenocysteine. ATP is bound by residues Lys-19 and Gly-46–Glu-48. Asp-49 lines the Mg(2+) pocket. ATP contacts are provided by residues Asp-66, Asp-89, and Gly-137–Thr-139. Asp-89 provides a ligand contact to Mg(2+). Mg(2+) is bound at residue Asp-225.

This sequence belongs to the selenophosphate synthase 1 family. Class I subfamily. In terms of assembly, homodimer. The cofactor is Mg(2+).

It carries out the reaction hydrogenselenide + ATP + H2O = selenophosphate + AMP + phosphate + 2 H(+). Functionally, synthesizes selenophosphate from selenide and ATP. The protein is Selenide, water dikinase of Geobacter sp. (strain M21).